The sequence spans 582 residues: A-type ATP synthase subunit A 1 (582 aa).

231 to 238 (GPFGSGKT) provides a ligand contact to ATP.

The protein belongs to the ATPase alpha/beta chains family. In terms of assembly, has multiple subunits with at least A(3), B(3), C, D, E, F, H, I and proteolipid K(x).

Its subcellular location is the cell membrane. The enzyme catalyses ATP + H2O + 4 H(+)(in) = ADP + phosphate + 5 H(+)(out). Its function is as follows. Component of the A-type ATP synthase that produces ATP from ADP in the presence of a proton gradient across the membrane. The A chain is the catalytic subunit. The protein is A-type ATP synthase subunit A 1 of Methanospirillum hungatei JF-1 (strain ATCC 27890 / DSM 864 / NBRC 100397 / JF-1).